We begin with the raw amino-acid sequence, 521 residues long: Importin subunit alpha-3 (521 aa).

Position 2 is an N-acetylalanine (Ala-2). One can recognise an IBB domain in the interval 2–58 (ADNEKLDNQRLKNFKNKGRDLETMRRQRNEVVVELRKNKRDEHLLKRRNVPQEDICE). A Nuclear localization signal motif is present at residues 43–52 (EHLLKRRNVP). Residue Ser-60 is modified to Phosphoserine. Residues 66–106 (YRVQNTSLEAIVQNASSDNQGIQLSAVQAARKLLSSDRNPP) form an ARM 1; truncated repeat. ARM repeat units follow at residues 107 to 149 (IDDL…TSEQ), 150 to 194 (TQAV…CRDY), 195 to 233 (VISLGVVKPLLSFISPSIPITFLRNVTWVMVNLCRHKDP), 234 to 278 (PPPM…EQIQ), 279 to 318 (MVIDSGIVPHLVPLLSHQEVKVQTAALRAVGNIVTGTDEQ), 319 to 360 (TQVV…NQQQ), 361 to 400 (VQAVIDANLVPMIIHLLDKGDFGTQKEAAWAISNLTISGR), and 401 to 443 (KDQV…KMAE). Residues 137-229 (WALTNIASGT…VTWVMVNLCR (93 aa)) are NLS binding site (major). An NLS binding site (minor) region spans residues 306–394 (RAVGNIVTGT…QKEAAWAISN (89 aa)). The stretch at 447-485 (ETIANLIEECGGLEKIEQLQNHENEDIYKLAYEIIDQFF) is one ARM 10; atypical repeat.

This sequence belongs to the importin alpha family. In terms of assembly, forms a complex with importin subunit beta-1 (KPNB1). Interacts with SNAI1. Interacts with TALDO1 isoform 1. Interacts with CYB1. Detected more or less in all tissues examined (Ehrlich ascites tumor cells, testis, kidney, spleen, liver, heart, lung, thymus, skeletal muscle, cerebellum and brain (without cerebellum)). Multiple-sized transcripts were highly expressed, especially in testis.

Its subcellular location is the cytoplasm. The protein resides in the nucleus. Functions in nuclear protein import as an adapter protein for nuclear receptor KPNB1. Binds specifically and directly to substrates containing either a simple or bipartite NLS motif. Docking of the importin/substrate complex to the nuclear pore complex (NPC) is mediated by KPNB1 through binding to nucleoporin FxFG repeats and the complex is subsequently translocated through the pore by an energy requiring, Ran-dependent mechanism. At the nucleoplasmic side of the NPC, Ran binds to importin-beta and the three components separate and importin-alpha and -beta are re-exported from the nucleus to the cytoplasm where GTP hydrolysis releases Ran from importin. The directionality of nuclear import is thought to be conferred by an asymmetric distribution of the GTP- and GDP-bound forms of Ran between the cytoplasm and nucleus. Mediates nuclear import of AARS1, MRTFA and RANBP3. The protein is Importin subunit alpha-3 (Kpna4) of Mus musculus (Mouse).